The sequence spans 295 residues: Probable cell division protein WhiA (295 aa).

The segment at residues Ser-262–Asp-293 is a DNA-binding region (H-T-H motif).

This sequence belongs to the WhiA family.

Its function is as follows. Involved in cell division and chromosome segregation. The polypeptide is Probable cell division protein WhiA (Thermotoga maritima (strain ATCC 43589 / DSM 3109 / JCM 10099 / NBRC 100826 / MSB8)).